A 337-amino-acid chain; its full sequence is Glyceraldehyde-3-phosphate dehydrogenase (337 aa).

NAD(+) is bound by residues 12–13, aspartate 34, and lysine 79; that span reads RI. D-glyceraldehyde 3-phosphate-binding positions include 150 to 152, threonine 181, 210 to 211, and arginine 233; these read SCT and TG. The active-site Nucleophile is cysteine 151. Asparagine 315 is a binding site for NAD(+).

Belongs to the glyceraldehyde-3-phosphate dehydrogenase family. In terms of assembly, homotetramer.

It is found in the cytoplasm. The catalysed reaction is D-glyceraldehyde 3-phosphate + phosphate + NAD(+) = (2R)-3-phospho-glyceroyl phosphate + NADH + H(+). Its pathway is carbohydrate degradation; glycolysis; pyruvate from D-glyceraldehyde 3-phosphate: step 1/5. The polypeptide is Glyceraldehyde-3-phosphate dehydrogenase (GPD) (Cochliobolus lunatus (Filamentous fungus)).